A 1343-amino-acid polypeptide reads, in one-letter code: DNA-directed RNA polymerase subunit beta (1343 aa).

The protein belongs to the RNA polymerase beta chain family. As to quaternary structure, the RNAP catalytic core consists of 2 alpha, 1 beta, 1 beta' and 1 omega subunit. When a sigma factor is associated with the core the holoenzyme is formed, which can initiate transcription.

It carries out the reaction RNA(n) + a ribonucleoside 5'-triphosphate = RNA(n+1) + diphosphate. In terms of biological role, DNA-dependent RNA polymerase catalyzes the transcription of DNA into RNA using the four ribonucleoside triphosphates as substrates. The polypeptide is DNA-directed RNA polymerase subunit beta (Haemophilus influenzae (strain ATCC 51907 / DSM 11121 / KW20 / Rd)).